A 717-amino-acid chain; its full sequence is MVFGWRKAFCTSVSSNQDKPQQHSSLHTTDPPIPTPRFRSKFGFLSNPSTPRLRSRGGSGTGCRSSASTSVTIPSLPTSPKLHCRTTSNATPRTSNSSSPKFFSNPSSPKSSSSSSSQGGGGVSLLRATLLLNKSNSSRCAICLQRVNSNQSNSTAAIFTAECSHSFHLSCVNGLEDKRCPFCSAAWNHAPKSNYPAVNNNFGSDPIRRPEIREIKTGKSLRVYNDDEPLAYSPVSLAQINTIHESDENDDVEDDDDFPGFFRDSSITSDMVPSISGNLEVKLLPESAVVETGKKKETHVVIMKLKASPSPSSITDAIKARRPSIDLVTVLDLSNGGANLQTVKHAMRSVISLLREMDRLSIVVFSTGSKRLMPLRRMTAKGRRSARRMVDALGGMETTGGVGMSVNDALKKAVKVVEDRREKNPSTSIFVLSDGQDQPEAVLKAKLNATRIPFVVSTTRFSRPEIPVHSVYIASPGALLHAPLRDAFTERIASLLNVTLHNVKLNLSLVNGSHLTEISSVYSLTGRLENFGSGSVIQVGDLFAEEEREFLVELKVPTSSSGSHQVMSVQSSIVDQMTHQPMTCPKEKRFLIPRPQSVRYVSSSIERLRNLHSMCRAVADSRRLIEREDLSGAYQVLTTARSNASHSDDSLRSLEVELNELSRIKPRNSILNRTEDKPEQLTPTSAWRAAEKLAKVAIMRKHLNRVSDMHGLENARF.

2 stretches are compositionally biased toward polar residues: residues 13–28 (VSSNQDKPQQHSSLHT) and 85–94 (RTTSNATPRT). The disordered stretch occupies residues 13-120 (VSSNQDKPQQ…SSSSSSSQGG (108 aa)). A compositionally biased stretch (low complexity) spans 95-117 (SNSSSPKFFSNPSSPKSSSSSSS). The segment at 140–184 (CAICLQRVNSNQSNSTAAIFTAECSHSFHLSCVNGLEDKRCPFCS) adopts an RING-type; atypical zinc-finger fold. The VWFA domain maps to 326–456 (DLVTVLDLSN…LNATRIPFVV (131 aa)).

Expressed in root tips, cotyledons, leaf primordia and hypocotyls.

It carries out the reaction S-ubiquitinyl-[E2 ubiquitin-conjugating enzyme]-L-cysteine + [acceptor protein]-L-lysine = [E2 ubiquitin-conjugating enzyme]-L-cysteine + N(6)-ubiquitinyl-[acceptor protein]-L-lysine.. Probable E3 ubiquitin-protein ligase involved in the regulation of root growth. Acts as a positive regulator of root gravitropism. This Arabidopsis thaliana (Mouse-ear cress) protein is Probable E3 ubiquitin-protein ligase WAVH2.